Here is a 218-residue protein sequence, read N- to C-terminus: Small ribosomal subunit protein uS3c (218 aa).

A KH type-2 domain is found at 47 to 118; the sequence is VYKNIRNSSN…KLRMTLTEVT (72 aa).

Belongs to the universal ribosomal protein uS3 family. Part of the 30S ribosomal subunit.

It localises to the plastid. The protein resides in the chloroplast. The protein is Small ribosomal subunit protein uS3c (rps3) of Physcomitrium patens (Spreading-leaved earth moss).